A 252-amino-acid chain; its full sequence is 2-succinyl-6-hydroxy-2,4-cyclohexadiene-1-carboxylate synthase (252 aa).

It belongs to the AB hydrolase superfamily. MenH family. In terms of assembly, monomer.

The catalysed reaction is 5-enolpyruvoyl-6-hydroxy-2-succinyl-cyclohex-3-ene-1-carboxylate = (1R,6R)-6-hydroxy-2-succinyl-cyclohexa-2,4-diene-1-carboxylate + pyruvate. The protein operates within quinol/quinone metabolism; 1,4-dihydroxy-2-naphthoate biosynthesis; 1,4-dihydroxy-2-naphthoate from chorismate: step 3/7. Its pathway is quinol/quinone metabolism; menaquinone biosynthesis. Its function is as follows. Catalyzes a proton abstraction reaction that results in 2,5-elimination of pyruvate from 2-succinyl-5-enolpyruvyl-6-hydroxy-3-cyclohexene-1-carboxylate (SEPHCHC) and the formation of 2-succinyl-6-hydroxy-2,4-cyclohexadiene-1-carboxylate (SHCHC). The sequence is that of 2-succinyl-6-hydroxy-2,4-cyclohexadiene-1-carboxylate synthase from Salmonella choleraesuis (strain SC-B67).